The primary structure comprises 428 residues: Putative UDP-glucose 6-dehydrogenase YtcA (428 aa).

A signal peptide spans methionine 1 to glycine 23. NAD(+) contacts are provided by residues lysine 2–leucine 19, valine 11, aspartate 30, lysine 35, threonine 118, and glutamate 152. Residues glutamate 148–glutamate 152, lysine 203, asparagine 207, phenylalanine 248–glycine 252, and glycine 256 contribute to the substrate site. Catalysis depends on cysteine 259, which acts as the Nucleophile. Lysine 262 is an NAD(+) binding site. Position 319 (lysine 319) interacts with substrate. Arginine 326 is a binding site for NAD(+).

Belongs to the UDP-glucose/GDP-mannose dehydrogenase family.

The enzyme catalyses UDP-alpha-D-glucose + 2 NAD(+) + H2O = UDP-alpha-D-glucuronate + 2 NADH + 3 H(+). It participates in nucleotide-sugar biosynthesis; UDP-alpha-D-glucuronate biosynthesis; UDP-alpha-D-glucuronate from UDP-alpha-D-glucose: step 1/1. Its function is as follows. Catalyzes the conversion of UDP-glucose into UDP-glucuronate, one of the precursors of teichuronic acid. This Bacillus subtilis (strain 168) protein is Putative UDP-glucose 6-dehydrogenase YtcA (ytcA).